We begin with the raw amino-acid sequence, 713 residues long: Polyribonucleotide nucleotidyltransferase (713 aa).

The Mg(2+) site is built by aspartate 487 and aspartate 493. Residues 554 to 613 form the KH domain; the sequence is PRIEVMNIPVDKIREVIGSGGKVIREIVEKTGAKINIEDDGTVKIASASGKEIEAARKWI. Positions 623-691 constitute an S1 motif domain; that stretch reads GQIYEGTVVK…ERGKVRLSMK (69 aa).

Belongs to the polyribonucleotide nucleotidyltransferase family. Mg(2+) serves as cofactor.

The protein localises to the cytoplasm. It catalyses the reaction RNA(n+1) + phosphate = RNA(n) + a ribonucleoside 5'-diphosphate. In terms of biological role, involved in mRNA degradation. Catalyzes the phosphorolysis of single-stranded polyribonucleotides processively in the 3'- to 5'-direction. This chain is Polyribonucleotide nucleotidyltransferase, found in Agrobacterium fabrum (strain C58 / ATCC 33970) (Agrobacterium tumefaciens (strain C58)).